Consider the following 261-residue polypeptide: Cytochrome c oxidase subunit 3 (261 aa).

At 1–15 (MTHQTHAYHMVNPSP) the chain is on the mitochondrial matrix side. A helical membrane pass occupies residues 16-34 (WPLTGALSALLMTSGLIMW). Residues 35–40 (FHFNST) are Mitochondrial intermembrane-facing. The chain crosses the membrane as a helical span at residues 41–66 (TLLMLGLTTNMLTMYQWWRDIIREST). At 67–72 (FQGHHT) the chain is on the mitochondrial matrix side. The helical transmembrane segment at 73-105 (PNVQKGLRYGMILFIISEVLFFTGFFWAFYHSS) threads the bilayer. The Mitochondrial intermembrane segment spans residues 106–128 (LAPTPELGGCWPPTGIHPLNPLE). The helical transmembrane segment at 129–152 (VPLLNTSVLLASGVSITWAHHSLM) threads the bilayer. Over 153 to 155 (EGN) the chain is Mitochondrial matrix. Residues 156–183 (RNHMLQALFITIALGVYFTLLQASEYYE) traverse the membrane as a helical segment. Residues 184–190 (APFTISD) lie on the Mitochondrial intermembrane side of the membrane. A helical membrane pass occupies residues 191 to 223 (GVYGSTFFVATGFHGLHVIIGSTFLIVCFFRQL). The Mitochondrial matrix segment spans residues 224–232 (KFHFTSSHH). The helical transmembrane segment at 233–256 (FGFEAAAWYWHFVDVVWLFLYVSI) threads the bilayer. Residues 257–261 (YWWGS) lie on the Mitochondrial intermembrane side of the membrane.

It belongs to the cytochrome c oxidase subunit 3 family. Component of the cytochrome c oxidase (complex IV, CIV), a multisubunit enzyme composed of 14 subunits. The complex is composed of a catalytic core of 3 subunits MT-CO1, MT-CO2 and MT-CO3, encoded in the mitochondrial DNA, and 11 supernumerary subunits COX4I, COX5A, COX5B, COX6A, COX6B, COX6C, COX7A, COX7B, COX7C, COX8 and NDUFA4, which are encoded in the nuclear genome. The complex exists as a monomer or a dimer and forms supercomplexes (SCs) in the inner mitochondrial membrane with NADH-ubiquinone oxidoreductase (complex I, CI) and ubiquinol-cytochrome c oxidoreductase (cytochrome b-c1 complex, complex III, CIII), resulting in different assemblies (supercomplex SCI(1)III(2)IV(1) and megacomplex MCI(2)III(2)IV(2)).

It is found in the mitochondrion inner membrane. The catalysed reaction is 4 Fe(II)-[cytochrome c] + O2 + 8 H(+)(in) = 4 Fe(III)-[cytochrome c] + 2 H2O + 4 H(+)(out). Component of the cytochrome c oxidase, the last enzyme in the mitochondrial electron transport chain which drives oxidative phosphorylation. The respiratory chain contains 3 multisubunit complexes succinate dehydrogenase (complex II, CII), ubiquinol-cytochrome c oxidoreductase (cytochrome b-c1 complex, complex III, CIII) and cytochrome c oxidase (complex IV, CIV), that cooperate to transfer electrons derived from NADH and succinate to molecular oxygen, creating an electrochemical gradient over the inner membrane that drives transmembrane transport and the ATP synthase. Cytochrome c oxidase is the component of the respiratory chain that catalyzes the reduction of oxygen to water. Electrons originating from reduced cytochrome c in the intermembrane space (IMS) are transferred via the dinuclear copper A center (CU(A)) of subunit 2 and heme A of subunit 1 to the active site in subunit 1, a binuclear center (BNC) formed by heme A3 and copper B (CU(B)). The BNC reduces molecular oxygen to 2 water molecules using 4 electrons from cytochrome c in the IMS and 4 protons from the mitochondrial matrix. In Litocranius walleri (Gerenuk), this protein is Cytochrome c oxidase subunit 3 (MT-CO3).